A 364-amino-acid chain; its full sequence is tRNA 2-selenouridine synthase (364 aa).

The Rhodanese domain occupies 14–137 (LLADTPLIDV…LRQTAIQATW (124 aa)). Cysteine 97 acts as the S-selanylcysteine intermediate in catalysis. Glycine 149 contacts (2E)-geranyl diphosphate.

Belongs to the SelU family. Monomer.

The catalysed reaction is 5-methylaminomethyl-2-thiouridine(34) in tRNA + selenophosphate + (2E)-geranyl diphosphate + H2O + H(+) = 5-methylaminomethyl-2-selenouridine(34) in tRNA + (2E)-thiogeraniol + phosphate + diphosphate. It catalyses the reaction 5-methylaminomethyl-2-thiouridine(34) in tRNA + (2E)-geranyl diphosphate = 5-methylaminomethyl-S-(2E)-geranyl-thiouridine(34) in tRNA + diphosphate. The enzyme catalyses 5-methylaminomethyl-S-(2E)-geranyl-thiouridine(34) in tRNA + selenophosphate + H(+) = 5-methylaminomethyl-2-(Se-phospho)selenouridine(34) in tRNA + (2E)-thiogeraniol. It carries out the reaction 5-methylaminomethyl-2-(Se-phospho)selenouridine(34) in tRNA + H2O = 5-methylaminomethyl-2-selenouridine(34) in tRNA + phosphate. Functionally, involved in the post-transcriptional modification of the uridine at the wobble position (U34) of tRNA(Lys), tRNA(Glu) and tRNA(Gln). Catalyzes the conversion of 2-thiouridine (S2U-RNA) to 2-selenouridine (Se2U-RNA). Acts in a two-step process involving geranylation of 2-thiouridine (S2U) to S-geranyl-2-thiouridine (geS2U) and subsequent selenation of the latter derivative to 2-selenouridine (Se2U) in the tRNA chain. This chain is tRNA 2-selenouridine synthase, found in Salmonella typhimurium (strain LT2 / SGSC1412 / ATCC 700720).